Here is a 355-residue protein sequence, read N- to C-terminus: 3-isopropylmalate dehydrogenase (355 aa).

Positions 90, 100, 128, and 222 each coordinate substrate. Residues Asp222, Asp246, and Asp250 each coordinate Mg(2+). Residue 280–292 (GSAPDIAGKGVAN) participates in NAD(+) binding.

Belongs to the isocitrate and isopropylmalate dehydrogenases family. LeuB type 1 subfamily. Homodimer. Mg(2+) is required as a cofactor. It depends on Mn(2+) as a cofactor.

Its subcellular location is the cytoplasm. The catalysed reaction is (2R,3S)-3-isopropylmalate + NAD(+) = 4-methyl-2-oxopentanoate + CO2 + NADH. Its pathway is amino-acid biosynthesis; L-leucine biosynthesis; L-leucine from 3-methyl-2-oxobutanoate: step 3/4. Its function is as follows. Catalyzes the oxidation of 3-carboxy-2-hydroxy-4-methylpentanoate (3-isopropylmalate) to 3-carboxy-4-methyl-2-oxopentanoate. The product decarboxylates to 4-methyl-2 oxopentanoate. The sequence is that of 3-isopropylmalate dehydrogenase from Cupriavidus pinatubonensis (strain JMP 134 / LMG 1197) (Cupriavidus necator (strain JMP 134)).